The chain runs to 167 residues: MPSSASEQLLRKQLKEIQKNPPQGFSVGLVDDKSIFEWEVMIIGPEDTLYEGGFFHATLSFPQDYPLMPPKMKFTTEIWHPNVHPNGEVCISILHPPGDDKYGYEDAGERWLPVHSPETILISVISMLSSPNDESPANIDAAKEFRENPQEFKKRVRRLVRRSIEMI.

Positions 5 to 165 (ASEQLLRKQL…VRRLVRRSIE (161 aa)) constitute a UBC core domain. The active-site Glycyl thioester intermediate is cysteine 90.

It belongs to the ubiquitin-conjugating enzyme family.

The catalysed reaction is S-ubiquitinyl-[E1 ubiquitin-activating enzyme]-L-cysteine + [E2 ubiquitin-conjugating enzyme]-L-cysteine = [E1 ubiquitin-activating enzyme]-L-cysteine + S-ubiquitinyl-[E2 ubiquitin-conjugating enzyme]-L-cysteine.. It participates in protein modification; protein ubiquitination. In terms of biological role, catalyzes the covalent attachment of ubiquitin to other proteins. Has a role in the formation of chromatin structures that influence the localization of transcriptional silencing factors. This Schizosaccharomyces pombe (strain 972 / ATCC 24843) (Fission yeast) protein is Ubiquitin-conjugating enzyme E2 15 (ubc15).